A 321-amino-acid polypeptide reads, in one-letter code: UPF0676 protein C1494.01 (321 aa).

The region spanning 159 to 267 is the Fe2OG dioxygenase domain; the sequence is EEDVLRLLKY…RQTIAYFVTP (109 aa).

It belongs to the UPF0676 family.

Its subcellular location is the cytoplasm. The protein localises to the nucleus. In Schizosaccharomyces pombe (strain 972 / ATCC 24843) (Fission yeast), this protein is UPF0676 protein C1494.01.